The sequence spans 87 residues: Phosphoribosyl-ATP pyrophosphatase (87 aa).

It belongs to the PRA-PH family.

The protein localises to the cytoplasm. It catalyses the reaction 1-(5-phospho-beta-D-ribosyl)-ATP + H2O = 1-(5-phospho-beta-D-ribosyl)-5'-AMP + diphosphate + H(+). It participates in amino-acid biosynthesis; L-histidine biosynthesis; L-histidine from 5-phospho-alpha-D-ribose 1-diphosphate: step 2/9. The sequence is that of Phosphoribosyl-ATP pyrophosphatase from Kocuria rhizophila (strain ATCC 9341 / DSM 348 / NBRC 103217 / DC2201).